We begin with the raw amino-acid sequence, 136 residues long: NADPH-dependent 7-cyano-7-deazaguanine reductase (136 aa).

Residue C50 is the Thioimide intermediate of the active site. D57 (proton donor) is an active-site residue. Residues 72–74 and 91–92 contribute to the substrate site; these read YEL and HE.

This sequence belongs to the GTP cyclohydrolase I family. QueF type 1 subfamily.

It localises to the cytoplasm. The catalysed reaction is 7-aminomethyl-7-carbaguanine + 2 NADP(+) = 7-cyano-7-deazaguanine + 2 NADPH + 3 H(+). Its pathway is tRNA modification; tRNA-queuosine biosynthesis. In terms of biological role, catalyzes the NADPH-dependent reduction of 7-cyano-7-deazaguanine (preQ0) to 7-aminomethyl-7-deazaguanine (preQ1). This Prochlorococcus marinus (strain MIT 9515) protein is NADPH-dependent 7-cyano-7-deazaguanine reductase.